The primary structure comprises 113 residues: Large ribosomal subunit protein uL22 (113 aa).

This sequence belongs to the universal ribosomal protein uL22 family. In terms of assembly, part of the 50S ribosomal subunit.

Its function is as follows. This protein binds specifically to 23S rRNA; its binding is stimulated by other ribosomal proteins, e.g. L4, L17, and L20. It is important during the early stages of 50S assembly. It makes multiple contacts with different domains of the 23S rRNA in the assembled 50S subunit and ribosome. In terms of biological role, the globular domain of the protein is located near the polypeptide exit tunnel on the outside of the subunit, while an extended beta-hairpin is found that lines the wall of the exit tunnel in the center of the 70S ribosome. In Xanthomonas axonopodis pv. citri (strain 306), this protein is Large ribosomal subunit protein uL22.